The following is a 437-amino-acid chain: ATP-dependent RNA helicase RhlB (437 aa).

Positions 9-37 (QKFADLGLQPQVTEGLEKKGFEYCTPIQA) match the Q motif motif. The 180-residue stretch at 40–219 (LPVLLTGQDI…FEHMHNPEHV (180 aa)) folds into the Helicase ATP-binding domain. 53-60 (AQTGTGKT) serves as a coordination point for ATP. Positions 165-168 (DEAD) match the DEAD box motif. Residues 245 to 390 (ALLQTLIEEE…VSEYDASALI (146 aa)) form the Helicase C-terminal domain. The tract at residues 397-437 (IRMRAPRVQQRRTNTGGTRSGNRKPQGRRPRQPRQSAPKQS) is disordered. A compositionally biased stretch (basic residues) spans 417–428 (GNRKPQGRRPRQ).

The protein belongs to the DEAD box helicase family. RhlB subfamily. In terms of assembly, component of the RNA degradosome, which is a multiprotein complex involved in RNA processing and mRNA degradation.

The protein resides in the cytoplasm. The catalysed reaction is ATP + H2O = ADP + phosphate + H(+). In terms of biological role, DEAD-box RNA helicase involved in RNA degradation. Has RNA-dependent ATPase activity and unwinds double-stranded RNA. This Vibrio parahaemolyticus serotype O3:K6 (strain RIMD 2210633) protein is ATP-dependent RNA helicase RhlB.